Reading from the N-terminus, the 539-residue chain is DnaJ homolog subfamily C member 7 homolog (539 aa).

6 TPR repeats span residues 3–36 (HEECKTQGNNYFKQSQYMDAIRCYTQAIELSNGT), 75–108 (IKGYTRASKAYIHLAQYDQAASIIVRGLVFDPRN), 189–222 (PEYLYVRGLSLYYQNNFPLALQHFQNSLTYDPDY), 235–268 (IESKKKEGNEYFQSKNYQAAYDSFTEALSIDPKL), 273–306 (SQLYSNRAAALVHLNRISEAINDCTSAVTIDPNY), and 307–340 (GKAYIRRAQCQMKQENYEDAVRDYEKAQSLDPEN). Positions 361-431 (DYYKILGVSK…KKKRQYDMGQ (71 aa)) constitute a J domain. The tract at residues 512–539 (MGGGFGGHSGHSHGGSRSRSSRGGNEYR) is disordered. Basic residues predominate over residues 521–531 (GHSHGGSRSRS).

The protein is DnaJ homolog subfamily C member 7 homolog (dnajc7) of Dictyostelium discoideum (Social amoeba).